The chain runs to 229 residues: MSQPRPLLSPPETEEQLLAQAQQLSGYTLGELAALVGLVTPENLKRDKGWIGVLLEIWLGASAGSKPEQDFAALGVELKTIPVDSLGRPLETTFVCVAPLTGNSGVTWETSHVRHKLKRVLWIPVEGERSIPLAQRRVGSPLLWSPNEEEDRQLREDWEELMDMIVLGQVERITARHGEYLQIRPKAANAKALTEAIGARGERILTLPRGFYLKKNFTSALLARHFLIQ.

The protein belongs to the MutH family.

It localises to the cytoplasm. In terms of biological role, sequence-specific endonuclease that cleaves unmethylated GATC sequences. It is involved in DNA mismatch repair. The chain is DNA mismatch repair protein MutH from Escherichia coli (strain K12 / MC4100 / BW2952).